We begin with the raw amino-acid sequence, 264 residues long: Hydroxyethylthiazole kinase (264 aa).

Substrate is bound at residue methionine 47. Positions 123 and 169 each coordinate ATP. Glycine 196 contacts substrate.

This sequence belongs to the Thz kinase family. The cofactor is Mg(2+).

The enzyme catalyses 5-(2-hydroxyethyl)-4-methylthiazole + ATP = 4-methyl-5-(2-phosphooxyethyl)-thiazole + ADP + H(+). It participates in cofactor biosynthesis; thiamine diphosphate biosynthesis; 4-methyl-5-(2-phosphoethyl)-thiazole from 5-(2-hydroxyethyl)-4-methylthiazole: step 1/1. Its function is as follows. Catalyzes the phosphorylation of the hydroxyl group of 4-methyl-5-beta-hydroxyethylthiazole (THZ). The protein is Hydroxyethylthiazole kinase of Brachyspira hyodysenteriae (strain ATCC 49526 / WA1).